The chain runs to 2622 residues: Ankyrin-3 (2622 aa).

The tract at residues methionine 1–serine 44 is disordered. A compositionally biased stretch (basic residues) spans lysine 25–lysine 38. Serine 39 is subject to Phosphoserine. ANK repeat units follow at residues asparagine 73 to alanine 102, lysine 106 to alanine 135, asparagine 139 to leucine 168, aspartate 172 to valine 201, leucine 203 to isoleucine 230, serine 242 to phenylalanine 271, asparagine 275 to alanine 304, aspartate 308 to serine 337, asparagine 341 to aspartate 370, aspartate 374 to alanine 403, asparagine 407 to alanine 436, serine 440 to threonine 469, arginine 473 to alanine 502, aspartate 506 to alanine 535, serine 539 to isoleucine 568, lysine 572 to alanine 601, serine 605 to alanine 634, asparagine 638 to alanine 667, glutamine 671 to leucine 700, serine 704 to alanine 733, methionine 737 to alanine 766, asparagine 770 to glutamate 799, and asparagine 803 to threonine 832. Serine 631 is modified (phosphoserine). 10 positions are modified to phosphoserine: valine 851, serine 855, serine 869, serine 875, serine 921, serine 924, serine 930, serine 965, serine 967, and serine 1121. Residues leucine 868–aspartate 889 are disordered. The segment covering tyrosine 873–isoleucine 884 has biased composition (acidic residues). ZU5 domains follow at residues phenylalanine 992–arginine 1147 and lysine 1149–cysteine 1296. Phosphoserine is present on residues serine 1458 and serine 1469. The segment at threonine 1510–isoleucine 1539 is disordered. The segment covering proline 1515–leucine 1536 has biased composition (low complexity). Serine 1621, serine 1624, serine 1679, serine 1984, serine 2102, serine 2114, and serine 2117 each carry phosphoserine. Disordered regions lie at residues valine 1968–phenylalanine 1992, isoleucine 2099–valine 2147, and serine 2292–glutamine 2312. A compositionally biased stretch (basic and acidic residues) spans proline 1977 to glutamate 1986. Over residues phenylalanine 2106–lysine 2127 the composition is skewed to basic and acidic residues. The segment covering threonine 2128–serine 2137 has biased composition (polar residues). A Death domain is found at threonine 2336–isoleucine 2420. Phosphoserine occurs at positions 2457, 2475, and 2544. A disordered region spans residues cysteine 2568–histidine 2622. Positions glycine 2594–histidine 2622 are enriched in basic and acidic residues.

May be a constituent of a NFASC/NRCAM/ankyrin G complex. Interacts with RHBG. Directly interacts with DMD and betaDAG1; this interaction does not interfere with DMD-binding and is required for DMD and betaDAG1 retention at costameres. Interacts (via N-terminal ANK repeats) with SCHIP1 isoform 7 (via C-terminus); this interaction is required for the localization at axon initial segments (AISs) and nodes of Ranvier (NRs). Interacts with PLEC and FLNC. Interacts (via ANK repeats) with IQCJ-SCHIP1; required for IQCJ-SCHIP1 localization at axon initial segments (AIS) and nodes of Ranvier. Interacts with SCHIP1. Interacts with KCNA1; this inhibits channel activity. Interacts with SCN5A. Interacts with PKP2 and GJA1/CX43. As to quaternary structure, interacts (via its C-terminal muscle-specific Obscurin/Titin-Binding-related domain sequence) with PLEC and FLNC. In terms of tissue distribution, expressed in the heart (at protein level). Expressed in skeletal muscle (at protein level). Expressed at highest levels in brain and testis, followed by skin, kidney, liver and spleen. As to expression, may be specifically expressed in muscle tissues, including heart and skeletal muscle (extensor digitorum longus) (at protein level). Expressed in skeletal muscle, brain, lung, heart, testes and kidney.

It is found in the cytoplasm. The protein resides in the cytoskeleton. It localises to the cell projection. Its subcellular location is the axon. The protein localises to the cell membrane. It is found in the sarcolemma. The protein resides in the postsynaptic cell membrane. It localises to the lysosome. Its subcellular location is the T-tubule. Its function is as follows. Membrane-cytoskeleton linker. May participate in the maintenance/targeting of ion channels and cell adhesion molecules at the nodes of Ranvier and axonal initial segments. In skeletal muscle, required for costamere localization of DMD and betaDAG1. Regulates KCNA1 channel activity in function of dietary Mg(2+) levels, and thereby contributes to the regulation of renal Mg(2+) reabsorption. Required for intracellular adhesion and junctional conductance in myocytes, potentially via stabilization of GJA1/CX43 protein abundance and promotion of PKP2, GJA1/CX43, and SCN5A/Nav1.5 localization to cell-cell junctions. This Rattus norvegicus (Rat) protein is Ankyrin-3 (Ank3).